The sequence spans 117 residues: Ig heavy chain V region UPC10 (117 aa).

Residues 1–116 enclose the Ig-like domain; that stretch reads EVKLLESGGG…WGQVTTLTVS (116 aa).

This Mus musculus (Mouse) protein is Ig heavy chain V region UPC10.